The following is a 197-amino-acid chain: Recombination protein RecR (197 aa).

A C4-type zinc finger spans residues 56 to 71 (CQQCRNLSETEICGFC). Residues 79-174 (DQLCIVETPT…SVTRLAQGIP (96 aa)) enclose the Toprim domain.

This sequence belongs to the RecR family.

May play a role in DNA repair. It seems to be involved in an RecBC-independent recombinational process of DNA repair. It may act with RecF and RecO. This Hydrogenovibrio crunogenus (strain DSM 25203 / XCL-2) (Thiomicrospira crunogena) protein is Recombination protein RecR.